Reading from the N-terminus, the 640-residue chain is 1-deoxy-D-xylulose-5-phosphate synthase (640 aa).

Residues His72 and 113-115 (GHA) each bind thiamine diphosphate. Asp144 provides a ligand contact to Mg(2+). Thiamine diphosphate-binding positions include 145–146 (GA), Asn174, Tyr287, and Glu370. Asn174 contributes to the Mg(2+) binding site.

It belongs to the transketolase family. DXPS subfamily. In terms of assembly, homodimer. The cofactor is Mg(2+). It depends on thiamine diphosphate as a cofactor.

The catalysed reaction is D-glyceraldehyde 3-phosphate + pyruvate + H(+) = 1-deoxy-D-xylulose 5-phosphate + CO2. The protein operates within metabolic intermediate biosynthesis; 1-deoxy-D-xylulose 5-phosphate biosynthesis; 1-deoxy-D-xylulose 5-phosphate from D-glyceraldehyde 3-phosphate and pyruvate: step 1/1. Functionally, catalyzes the acyloin condensation reaction between C atoms 2 and 3 of pyruvate and glyceraldehyde 3-phosphate to yield 1-deoxy-D-xylulose-5-phosphate (DXP). This chain is 1-deoxy-D-xylulose-5-phosphate synthase, found in Synechococcus sp. (strain RCC307).